The sequence spans 322 residues: Gluconeogenesis factor (322 aa).

It belongs to the gluconeogenesis factor family.

The protein localises to the cytoplasm. In terms of biological role, required for morphogenesis under gluconeogenic growth conditions. This is Gluconeogenesis factor from Listeria innocua serovar 6a (strain ATCC BAA-680 / CLIP 11262).